A 423-amino-acid chain; its full sequence is 3-phosphoshikimate 1-carboxyvinyltransferase (423 aa).

Positions 28, 29, and 33 each coordinate 3-phosphoshikimate. A phosphoenolpyruvate-binding site is contributed by Lys-28. Positions 96 and 124 each coordinate phosphoenolpyruvate. Residues Ser-169, Ser-170, Gln-171, Ser-198, Glu-312, and His-339 each coordinate 3-phosphoshikimate. Gln-171 contacts phosphoenolpyruvate. The Proton acceptor role is filled by Glu-312. Phosphoenolpyruvate contacts are provided by Arg-343, Arg-384, and Lys-409.

It belongs to the EPSP synthase family. As to quaternary structure, monomer.

It localises to the cytoplasm. The enzyme catalyses 3-phosphoshikimate + phosphoenolpyruvate = 5-O-(1-carboxyvinyl)-3-phosphoshikimate + phosphate. Its pathway is metabolic intermediate biosynthesis; chorismate biosynthesis; chorismate from D-erythrose 4-phosphate and phosphoenolpyruvate: step 6/7. Its function is as follows. Catalyzes the transfer of the enolpyruvyl moiety of phosphoenolpyruvate (PEP) to the 5-hydroxyl of shikimate-3-phosphate (S3P) to produce enolpyruvyl shikimate-3-phosphate and inorganic phosphate. This is 3-phosphoshikimate 1-carboxyvinyltransferase from Acidothermus cellulolyticus (strain ATCC 43068 / DSM 8971 / 11B).